The following is a 249-amino-acid chain: Ribosomal RNA small subunit methyltransferase J (249 aa).

Asp-169 provides a ligand contact to S-adenosyl-L-methionine.

Belongs to the methyltransferase superfamily. RsmJ family.

It localises to the cytoplasm. The catalysed reaction is guanosine(1516) in 16S rRNA + S-adenosyl-L-methionine = N(2)-methylguanosine(1516) in 16S rRNA + S-adenosyl-L-homocysteine + H(+). In terms of biological role, specifically methylates the guanosine in position 1516 of 16S rRNA. The polypeptide is Ribosomal RNA small subunit methyltransferase J (Buchnera aphidicola subsp. Schizaphis graminum (strain Sg)).